The chain runs to 99 residues: Plastocyanin (99 aa).

Residues 1 to 99 (IEVLLGGDDG…AGMVGKVTVN (99 aa)) form the Plastocyanin-like domain. Residues His37, Cys84, His87, and Met92 each coordinate Cu cation.

It belongs to the plastocyanin family. The cofactor is Cu(2+).

It localises to the plastid. The protein localises to the chloroplast thylakoid membrane. Functionally, participates in electron transfer between P700 and the cytochrome b6-f complex in photosystem I. In Cucurbita pepo (Vegetable marrow), this protein is Plastocyanin (PETE).